Here is a 509-residue protein sequence, read N- to C-terminus: Methylmalonyl-CoA decarboxylase subunit alpha (509 aa).

The region spanning 4–260 (VQEKIELLHE…NNMEDAPLVD (257 aa)) is the CoA carboxyltransferase N-terminal domain. A CoA carboxyltransferase C-terminal domain is found at 267 to 503 (REDESLNSLL…SKRENRAPKK (237 aa)).

This sequence belongs to the AccD/PCCB family. In terms of assembly, the methylmalonyl-CoA decarboxylase is composed of five subunits: the carboxyltransferase alpha subunit (MmdA), the tunnel beta subunit (MmdB), the biotin-containing gamma subunit (MmdC), and the delta (MmdD) and epsilon (MmdE) subunits. Interacts with the gamma subunit.

The protein localises to the cell membrane. The enzyme catalyses (S)-methylmalonyl-CoA + Na(+)(in) + H(+)(out) = propanoyl-CoA + Na(+)(out) + CO2. Its activity is regulated as follows. Completely inhibited by avidin. Its function is as follows. Carboxyltransferase subunit of the sodium ion pump methylmalonyl-CoA decarboxylase, which converts the chemical energy of a decarboxylation reaction into an electrochemical gradient of Na(+) ions across the cytoplasmic membrane, thereby creating a sodium ion motive force that is used for ATP synthesis. The alpha subunit catalyzes the Na(+)-independent carboxyltransfer from methylmalonyl-CoA to the prosthetic biotin group located on the gamma subunit. Can also convert malonyl-CoA into acetyl-CoA. The sequence is that of Methylmalonyl-CoA decarboxylase subunit alpha from Veillonella parvula (Staphylococcus parvulus).